Reading from the N-terminus, the 477-residue chain is Argininosuccinate lyase (477 aa).

Residues 1-18 (MTTSSHSSEQPTSTQTSG) show a composition bias toward polar residues. The interval 1 to 21 (MTTSSHSSEQPTSTQTSGMWG) is disordered.

Belongs to the lyase 1 family. Argininosuccinate lyase subfamily.

It is found in the cytoplasm. The enzyme catalyses 2-(N(omega)-L-arginino)succinate = fumarate + L-arginine. The protein operates within amino-acid biosynthesis; L-arginine biosynthesis; L-arginine from L-ornithine and carbamoyl phosphate: step 3/3. The polypeptide is Argininosuccinate lyase (Acinetobacter baylyi (strain ATCC 33305 / BD413 / ADP1)).